Reading from the N-terminus, the 270-residue chain is Aliphatic sulfonates import ATP-binding protein SsuB 3 (270 aa).

The 222-residue stretch at 17–238 folds into the ABC transporter domain; it reads LAVRNLKKAF…VRGSHRLAAL (222 aa). ATP is bound at residue 49 to 56; that stretch reads GRSGCGKS.

It belongs to the ABC transporter superfamily. Aliphatic sulfonates importer (TC 3.A.1.17.2) family. The complex is composed of two ATP-binding proteins (SsuB), two transmembrane proteins (SsuC) and a solute-binding protein (SsuA).

The protein localises to the cell inner membrane. The enzyme catalyses ATP + H2O + aliphatic sulfonate-[sulfonate-binding protein]Side 1 = ADP + phosphate + aliphatic sulfonateSide 2 + [sulfonate-binding protein]Side 1.. Part of the ABC transporter complex SsuABC involved in aliphatic sulfonates import. Responsible for energy coupling to the transport system. The sequence is that of Aliphatic sulfonates import ATP-binding protein SsuB 3 from Pseudomonas savastanoi pv. phaseolicola (strain 1448A / Race 6) (Pseudomonas syringae pv. phaseolicola (strain 1448A / Race 6)).